A 404-amino-acid polypeptide reads, in one-letter code: Argininosuccinate synthase (404 aa).

15-23 (AYSGGLDTS) contacts ATP. Tyr-94 contacts L-citrulline. Residue Gly-124 coordinates ATP. L-aspartate contacts are provided by Thr-126, Asn-130, and Asp-131. Asn-130 lines the L-citrulline pocket. Residues Arg-134, Ser-182, Glu-266, and Tyr-278 each coordinate L-citrulline.

It belongs to the argininosuccinate synthase family. Type 1 subfamily. In terms of assembly, homotetramer.

It is found in the cytoplasm. The enzyme catalyses L-citrulline + L-aspartate + ATP = 2-(N(omega)-L-arginino)succinate + AMP + diphosphate + H(+). It participates in amino-acid biosynthesis; L-arginine biosynthesis; L-arginine from L-ornithine and carbamoyl phosphate: step 2/3. This chain is Argininosuccinate synthase, found in Streptomyces avermitilis (strain ATCC 31267 / DSM 46492 / JCM 5070 / NBRC 14893 / NCIMB 12804 / NRRL 8165 / MA-4680).